Here is a 280-residue protein sequence, read N- to C-terminus: Nucleotide-binding protein Swoo_4243 (280 aa).

An ATP-binding site is contributed by 8–15 (GRSGSGKS). 56–59 (DVRN) contacts GTP.

The protein belongs to the RapZ-like family.

In terms of biological role, displays ATPase and GTPase activities. In Shewanella woodyi (strain ATCC 51908 / MS32), this protein is Nucleotide-binding protein Swoo_4243.